Here is a 231-residue protein sequence, read N- to C-terminus: Ion-translocating oxidoreductase complex subunit E (231 aa).

Transmembrane regions (helical) follow at residues 18 to 38 (ALVQ…ATNA), 39 to 59 (LGLG…ISTL), 63 to 83 (TPAE…VSAV), 86 to 106 (LINA…PLIV), 125 to 145 (ALSA…MCVL), and 182 to 202 (PFLL…MLAG).

This sequence belongs to the NqrDE/RnfAE family. The complex is composed of six subunits: RsxA, RsxB, RsxC, RsxD, RsxE and RsxG.

Its subcellular location is the cell inner membrane. Functionally, part of a membrane-bound complex that couples electron transfer with translocation of ions across the membrane. Required to maintain the reduced state of SoxR. The sequence is that of Ion-translocating oxidoreductase complex subunit E from Escherichia coli (strain SMS-3-5 / SECEC).